The sequence spans 140 residues: Nucleoside diphosphate kinase (140 aa).

ATP-binding residues include lysine 10, phenylalanine 58, arginine 86, threonine 92, arginine 103, and asparagine 113. Residue histidine 116 is the Pros-phosphohistidine intermediate of the active site.

The protein belongs to the NDK family. Homotetramer. Mg(2+) serves as cofactor.

It localises to the cytoplasm. It carries out the reaction a 2'-deoxyribonucleoside 5'-diphosphate + ATP = a 2'-deoxyribonucleoside 5'-triphosphate + ADP. It catalyses the reaction a ribonucleoside 5'-diphosphate + ATP = a ribonucleoside 5'-triphosphate + ADP. Functionally, major role in the synthesis of nucleoside triphosphates other than ATP. The ATP gamma phosphate is transferred to the NDP beta phosphate via a ping-pong mechanism, using a phosphorylated active-site intermediate. The sequence is that of Nucleoside diphosphate kinase from Anaplasma phagocytophilum (strain HZ).